The following is a 649-amino-acid chain: Ubiquitin-associated and SH3 domain-containing protein B (649 aa).

Ser20 is subject to Phosphoserine. Residue Thr23 is modified to Phosphothreonine. The 50-residue stretch at 27–76 (NRQQRPGTIKHGSALDVLLSMGFPRARAQKALASTGGRSVQAACDWLFSH) folds into the UBA domain. The region spanning 254–319 (ANHETLQVIY…PENYITKADE (66 aa)) is the SH3 domain. The segment at 380–649 (GPQKRCLFVC…FNWRETLLQE (270 aa)) is protein tyrosine phosphatase. Arg390 is an active-site residue. The active-site Tele-phosphohistidine intermediate is the His391. His576 is an active-site residue.

Homodimer. Interacts with JAK2 (in vitro). Interacts with CBL. Part of a complex containing CBL and activated EGFR. Interacts with ubiquitin and with mono-ubiquitinated proteins. Interacts with ZAP70 (ubiquitinated form).

The protein resides in the cytoplasm. It localises to the nucleus. The enzyme catalyses O-phospho-L-tyrosyl-[protein] + H2O = L-tyrosyl-[protein] + phosphate. Interferes with CBL-mediated down-regulation and degradation of receptor-type tyrosine kinases. Promotes accumulation of activated target receptors, such as T-cell receptors and EGFR, on the cell surface. Exhibits tyrosine phosphatase activity toward several substrates including EGFR, FAK, SYK, and ZAP70. Down-regulates proteins that are dually modified by both protein tyrosine phosphorylation and ubiquitination. The polypeptide is Ubiquitin-associated and SH3 domain-containing protein B (UBASH3B) (Homo sapiens (Human)).